A 452-amino-acid polypeptide reads, in one-letter code: NAD kinase 2, mitochondrial (452 aa).

Residues 1–50 (MTCYRGFLLGSCRRVAGGRAALRGSGSGADGRRHLGHGQPRELAGGGSPA) constitute a mitochondrion transit peptide. Positions 23 to 52 (RGSGSGADGRRHLGHGQPRELAGGGSPADG) are disordered. Residue lysine 64 is modified to N6-acetyllysine; alternate. Residue lysine 64 is modified to N6-succinyllysine; alternate. Position 176 is a phosphoserine (serine 176). Position 312 is an N6-succinyllysine (lysine 312). The residue at position 327 (lysine 327) is an N6-acetyllysine; alternate. Lysine 327 carries the post-translational modification N6-succinyllysine; alternate. Residue serine 377 is modified to Phosphoserine. Lysine 407 carries the N6-acetyllysine modification.

The protein belongs to the NAD kinase family. As to quaternary structure, homodimer.

It localises to the mitochondrion. It carries out the reaction NAD(+) + ATP = ADP + NADP(+) + H(+). Inhibited by NADH, NADPH and NADP(+). Mitochondrial NAD(+) kinase that phosphorylates NAD(+) to yield NADP(+). Can use both ATP or inorganic polyphosphate as the phosphoryl donor. The polypeptide is NAD kinase 2, mitochondrial (Nadk2) (Mus musculus (Mouse)).